Reading from the N-terminus, the 363-residue chain is 3-dehydroquinate synthase (363 aa).

Residues 107–111 (GVIGD), 131–132 (TT), Lys144, and Lys153 contribute to the NAD(+) site. Zn(2+) contacts are provided by Glu186, His251, and His268.

The protein belongs to the sugar phosphate cyclases superfamily. Dehydroquinate synthase family. Requires Co(2+) as cofactor. Zn(2+) serves as cofactor. The cofactor is NAD(+).

It is found in the cytoplasm. The enzyme catalyses 7-phospho-2-dehydro-3-deoxy-D-arabino-heptonate = 3-dehydroquinate + phosphate. Its pathway is metabolic intermediate biosynthesis; chorismate biosynthesis; chorismate from D-erythrose 4-phosphate and phosphoenolpyruvate: step 2/7. Catalyzes the conversion of 3-deoxy-D-arabino-heptulosonate 7-phosphate (DAHP) to dehydroquinate (DHQ). In Nostoc punctiforme (strain ATCC 29133 / PCC 73102), this protein is 3-dehydroquinate synthase.